Here is a 143-residue protein sequence, read N- to C-terminus: Large ribosomal subunit protein uL13 (143 aa).

Belongs to the universal ribosomal protein uL13 family. Part of the 50S ribosomal subunit.

Its function is as follows. This protein is one of the early assembly proteins of the 50S ribosomal subunit, although it is not seen to bind rRNA by itself. It is important during the early stages of 50S assembly. The chain is Large ribosomal subunit protein uL13 from Symbiobacterium thermophilum (strain DSM 24528 / JCM 14929 / IAM 14863 / T).